The sequence spans 1403 residues: DNA-directed RNA polymerase subunit beta' (1403 aa).

Zn(2+) contacts are provided by Cys-70, Cys-72, Cys-85, and Cys-88. Residues Asp-460, Asp-462, and Asp-464 each contribute to the Mg(2+) site. Positions 814, 888, 895, and 898 each coordinate Zn(2+). The interval 1369 to 1403 (RRKRRMLEQPESLTADTGTSHYGEDEISESGAATA) is disordered. The span at 1379–1388 (ESLTADTGTS) shows a compositional bias: polar residues.

The protein belongs to the RNA polymerase beta' chain family. The RNAP catalytic core consists of 2 alpha, 1 beta, 1 beta' and 1 omega subunit. When a sigma factor is associated with the core the holoenzyme is formed, which can initiate transcription. It depends on Mg(2+) as a cofactor. The cofactor is Zn(2+).

The catalysed reaction is RNA(n) + a ribonucleoside 5'-triphosphate = RNA(n+1) + diphosphate. DNA-dependent RNA polymerase catalyzes the transcription of DNA into RNA using the four ribonucleoside triphosphates as substrates. This is DNA-directed RNA polymerase subunit beta' from Nitrosococcus oceani (strain ATCC 19707 / BCRC 17464 / JCM 30415 / NCIMB 11848 / C-107).